A 592-amino-acid chain; its full sequence is Calnexin (592 aa).

Positions 1-20 (MEGKWLLCMLLVLGTAIVEA) are cleaved as a signal peptide. Over 21 to 481 (HDGHDDDVID…QMIEAAEERP (461 aa)) the chain is Lumenal. Ca(2+) is bound by residues Ser74 and Asp117. Position 137 is an N6-acetyllysine (Lys137). Cys160 and Cys194 are oxidised to a cystine. Positions 164, 166, 185, and 192 each coordinate an alpha-D-glucoside. The segment at 260–345 (GNLLNDMTPP…AEKPEDWDED (86 aa)) is disordered. Residues 274–319 (REIEDPEDRKPEDWDERPKIPDPEAVKPDDWDEDAPAKIPDEEATK) are compositionally biased toward basic and acidic residues. The interval 276 to 409 (IEDPEDRKPE…RKIPNPDFFE (134 aa)) is p domain (Extended arm). 5 consecutive repeat copies span residues 278–290 (DPED…WDER), 295–307 (DPEA…WDED), 314–326 (DEEA…WLDD), 333–345 (DPDA…WDED), and 348–358 (GEWEAPQIANP). 4 X approximate repeats regions lie at residues 278–345 (DPED…WDED) and 348–405 (GEWE…IPNP). Positions 323 to 345 (WLDDEPEYVPDPDAEKPEDWDED) are enriched in acidic residues. The interaction with PPIB stretch occupies residues 326–359 (DEPEYVPDPDAEKPEDWDEDMDGEWEAPQIANPK). Cys360 and Cys366 form a disulfide bridge. Tandem repeats lie at residues 367–377 (GVWQRPMIDNP), 381–391 (GKWKPPMIDNP), and 395–405 (GIWKPRKIPNP). An an alpha-D-glucoside-binding site is contributed by Glu425. Position 436 (Asp436) interacts with Ca(2+). Residues 482 to 502 (WLWVVYILTVALPVFLVILFC) form a helical membrane-spanning segment. S-palmitoyl cysteine attachment occurs at residues Cys502 and Cys503. At 503–592 (CSGKKQTSAM…SPRNRKPRRE (90 aa)) the chain is on the cytoplasmic side. The interval 503–592 (CSGKKQTSAM…SPRNRKPRRE (90 aa)) is sufficient to mediate interaction with SGIP1. Residues 511–592 (AMEYKKTDAP…SPRNRKPRRE (82 aa)) form a disordered region. Positions 525-547 (KEEEEEKEEEKDKGDEEEEGEEK) are enriched in acidic residues. Position 554 is a phosphoserine (Ser554). Thr562 is subject to Phosphothreonine. Phosphoserine; by MAPK3 is present on Ser564. Ser583 carries the phosphoserine modification.

Belongs to the calreticulin family. Interacts with MAPK3/ERK1. Interacts with KCNH2. Associates with ribosomes. Interacts with SGIP1; involved in negative regulation of endocytosis. The palmitoylated form interacts with the ribosome-translocon complex component SSR1, promoting efficient folding of glycoproteins. Interacts with SERPINA2P/SERPINA2 and with the S and Z variants of SERPINA1. Interacts with PPIB. Interacts with ZNRF4. Interacts with SMIM22. Interacts with TMX2. Interacts with TMEM35A/NACHO and CHRNA7. Interacts with reticulophagy regulators RETREG2 and RETREG3. Interacts with DNM1L; may form part of a larger protein complex at the ER-mitochondrial interface during mitochondrial fission. Interacts with ADAM7. In terms of processing, phosphorylated at Ser-564 by MAPK3/ERK1. Phosphorylation by MAPK3/ERK1 increases its association with ribosomes. Palmitoylation by DHHC6 leads to the preferential localization to the perinuclear rough ER. It mediates the association of calnexin with the ribosome-translocon complex (RTC) which is required for efficient folding of glycosylated proteins. Post-translationally, ubiquitinated, leading to proteasomal degradation. Probably ubiquitinated by ZNRF4.

Its subcellular location is the endoplasmic reticulum membrane. The protein resides in the mitochondrion membrane. It is found in the melanosome membrane. Its function is as follows. Calcium-binding protein that interacts with newly synthesized monoglucosylated glycoproteins in the endoplasmic reticulum. It may act in assisting protein assembly and/or in the retention within the ER of unassembled protein subunits. It seems to play a major role in the quality control apparatus of the ER by the retention of incorrectly folded proteins. Associated with partial T-cell antigen receptor complexes that escape the ER of immature thymocytes, it may function as a signaling complex regulating thymocyte maturation. Additionally it may play a role in receptor-mediated endocytosis at the synapse. This chain is Calnexin (CANX), found in Pongo abelii (Sumatran orangutan).